The chain runs to 986 residues: MAVRRLGAALLLLPLLAAVEETLMDSTTATAELGWMVHPPSGWEEVSGYDENMNTIRTYQVCNVFESSQNNWLRTKFIRRRGAHRIHVEMKFSVRDCSSIPSVPGSCKETFNLYYYEADFDLATKTFPNWMENPWVKVDTIAADESFSQVDLGGRVMKINTEVRSFGPVSRNGFYLAFQDYGGCMSLIAVRVFYRKCPRIIQNGAIFQETLSGAESTSLVAARGSCIANAEEVDVPIKLYCNGDGEWLVPIGRCMCKAGFEAVENGTVCRGCPSGTFKANQGDEACTHCPINSRTTSEGATNCVCRNGYYRADLDPLDMPCTTIPSAPQAVISSVNETSLMLEWTPPRDSGGREDLVYNIICKSCGSGRGACTRCGDNVQYAPRQLGLTEPRIYISDLLAHTQYTFEIQAVNGVTDQSPFSPQFASVNITTNQAAPSAVSIMHQVSRTVDSITLSWSQPDQPNGVILDYELQYYEKELSEYNATAIKSPTNTVTVQGLKAGAIYVFQVRARTVAGYGRYSGKMYFQTMTEAEYQTSIKEKLPLIVGSSAAGLVFLIAVVVIAIVCNRRGFERADSEYTDKLQHYTSGHMTPGMKIYIDPFTYEDPNEAVREFAKEIDISCVKIEQVIGAGEFGEVCSGHLKLPGKREIFVAIKTLKSGYTEKQRRDFLSEASIMGQFDHPNVIHLEGVVTKSTPVMIITEFMENGSLDSFLRQNDGQFTVIQLVGMLRGIAAGMKYLADMNYVHRDLAARNILVNSNLVCKVSDFGLSRFLEDDTSDPTYTSALGGKIPIRWTAPEAIQYRKFTSASDVWSYGIVMWEVMSYGERPYWDMTNQDVINAIEQDYRLPPPMDCPSALHQLMLDCWQKDRNHRPKFGQIVNTLDKMIRNPNSLKAMAPLSSGINLPLLDRTIPDYTSFNTVDEWLEAIKMGQYKESFANAGFTSFDVVSQMMMEDILRVGVTLAGHQKKILNSIQVMRAQMNQIQSVEV.

Positions methionine 1–alanine 18 are cleaved as a signal peptide. Residues valine 19–leucine 543 are Extracellular-facing. In terms of domain architecture, Eph LBD spans glutamate 20–glutamine 202. Intrachain disulfides connect cysteine 62–cysteine 184 and cysteine 97–cysteine 107. N-linked (GlcNAc...) asparagine glycosylation is found at asparagine 265, asparagine 336, asparagine 428, and asparagine 482. 2 Fibronectin type-III domains span residues isoleucine 324 to alanine 434 and alanine 435 to glutamate 530. A helical membrane pass occupies residues isoleucine 544–valine 564. Over cysteine 565–valine 986 the chain is Cytoplasmic. One can recognise a Protein kinase domain in the interval valine 621–isoleucine 884. ATP-binding positions include isoleucine 627 to valine 635 and lysine 653. Aspartate 746 serves as the catalytic Proton acceptor. A Glycyl lysine isopeptide (Lys-Gly) (interchain with G-Cter in ubiquitin) cross-link involves residue lysine 891. An SAM domain is found at threonine 913–glutamine 977. The PDZ-binding motif lies at valine 984 to valine 986.

Belongs to the protein kinase superfamily. Tyr protein kinase family. Ephrin receptor subfamily. In terms of assembly, heterotetramer upon binding of the ligand. The heterotetramer is composed of an ephrin dimer and a receptor dimer. Interacts (via PDZ-binding motif) with GRIP1 and PICK1 (via PDZ domain). Interacts with ARHGEF15; mediates ARHGEF15 phosphorylation, ubiquitination and degradation by the proteasome. Interacts with AQP1; involved in endolymph production in the inner ear. Interacts with EFNA5. Interacts with SPSB1. Interacts with SPSB4. Interacts with SH2D3C. Autophosphorylated; ligand binding stimulates autophosphorylation on tyrosine residues. Post-translationally, ligand binding induces cleavage by matrix metalloproteinases (MMPs) such as MMP7/MMP9, producing an EphB2/N-terminal fragment (NTF) and a C-terminal long fragment (EphB2-LF). EphB2-LF is further cleaved by MMPs, producing EphB2/CTF1 which is further cleaved by the PS1/gamma-secretase producing EphB2/CTF2. In terms of processing, polyubiquitinated; ligand binding stimulates ubiquitination. Ubiquitinated by RNF186 at Lys-891, mainly through 'Lys-27'-linked polyubiquitin chains. Ubiquitinated by CRL2(KLHDC2) E3 ligase complex. Expressed in the epithelial dark cells of the inner ear. Expressed in the region of the proximal tubules of the kidney nephron. Expressed in myogenic progenitor cells.

It is found in the cell membrane. The protein resides in the cell projection. Its subcellular location is the axon. The protein localises to the dendrite. It carries out the reaction L-tyrosyl-[protein] + ATP = O-phospho-L-tyrosyl-[protein] + ADP + H(+). Functionally, receptor tyrosine kinase which binds promiscuously transmembrane ephrin-B family ligands residing on adjacent cells, leading to contact-dependent bidirectional signaling into neighboring cells. The signaling pathway downstream of the receptor is referred to as forward signaling while the signaling pathway downstream of the ephrin ligand is referred to as reverse signaling. Functions in axon guidance during development. Involved in the guidance of commissural axons, that form a major interhemispheric connection between the 2 temporal lobes of the cerebral cortex. Also involved in guidance of contralateral inner ear efferent growth cones at the midline and of retinal ganglion cell axons to the optic disk. In addition to axon guidance, also regulates dendritic spines development and maturation and stimulates the formation of excitatory synapses. Upon activation by EFNB1, abolishes the ARHGEF15-mediated negative regulation on excitatory synapse formation. Controls other aspects of development including angiogenesis, palate development and in inner ear development through regulation of endolymph production. Forward and reverse signaling through the EFNB2/EPHB2 complex regulate movement and adhesion of cells that tubularize the urethra and septate the cloaca. May function as a tumor suppressor. May be involved in the regulation of platelet activation and blood coagulation. The polypeptide is Ephrin type-B receptor 2 (Mus musculus (Mouse)).